A 404-amino-acid chain; its full sequence is Protein L-Myc-1b (404 aa).

Disordered stretches follow at residues 175 to 195 and 238 to 331; these read KKQV…EEID and QQHN…FLER. A compositionally biased stretch (polar residues) spans 287–315; that stretch reads VPAQSPTVSASPTHTSYHLKSQPSSPQSS. The region spanning 321 to 373 is the bHLH domain; it reads DKRKTHNFLERKRRNDLRSRFLALRDEIPGLVDCPKTPKVVILTKATEYLRTL. The interval 373–401 is leucine-zipper; it reads LHVSDRQKAQEKKQLKSKQQQLLRRLAEL.

Efficient DNA binding requires dimerization with another bHLH protein. Binds DNA as a heterodimer with max.

Its subcellular location is the nucleus. The polypeptide is Protein L-Myc-1b (Danio rerio (Zebrafish)).